The primary structure comprises 828 residues: Putative dual specificity tyrosine-phosphorylation-regulated kinase 3 homolog (828 aa).

Positions 1 to 14 (MVGSQEKKNNHIEL) are enriched in basic and acidic residues. The segment at 1–26 (MVGSQEKKNNHIELSETPATDKNNLN) is disordered. A compositionally biased stretch (polar residues) spans 17 to 26 (TPATDKNNLN). The 314-residue stretch at 276–589 (YEMLKIIGKG…PSEALKHPWL (314 aa)) folds into the Protein kinase domain. ATP is bound by residues 282–290 (IGKGSFGQV) and Lys305. Asp402 functions as the Proton acceptor in the catalytic mechanism. Phosphoserine is present on Ser616.

It belongs to the protein kinase superfamily. CMGC Ser/Thr protein kinase family. MNB/DYRK subfamily. In terms of processing, autophosphorylated on tyrosine residues.

The catalysed reaction is L-seryl-[protein] + ATP = O-phospho-L-seryl-[protein] + ADP + H(+). The enzyme catalyses L-threonyl-[protein] + ATP = O-phospho-L-threonyl-[protein] + ADP + H(+). It carries out the reaction L-tyrosyl-[protein] + ATP = O-phospho-L-tyrosyl-[protein] + ADP + H(+). This chain is Putative dual specificity tyrosine-phosphorylation-regulated kinase 3 homolog (Dyrk3), found in Drosophila melanogaster (Fruit fly).